The chain runs to 492 residues: NADH-quinone oxidoreductase subunit N 2 (492 aa).

The next 14 membrane-spanning stretches (helical) occupy residues 16-36 (ILPE…DALI), 44-64 (PLGY…ACQA), 87-107 (FSLF…LVSF), 118-138 (GEYY…TSAT), 140-160 (LVLI…LAAM), 175-195 (FLLG…IFGA), 216-236 (PIIY…VAAA), 250-270 (PSPI…AVLL), 282-302 (FWIV…GALV), 309-329 (LLAY…AAAK), 333-353 (ISAA…AFAV), 381-401 (AAIL…GGFF), 416-438 (VWLT…RIIV), and 455-475 (PFGL…LGVL).

It belongs to the complex I subunit 2 family. As to quaternary structure, NDH-1 is composed of 14 different subunits. Subunits NuoA, H, J, K, L, M, N constitute the membrane sector of the complex.

It is found in the cell inner membrane. The enzyme catalyses a quinone + NADH + 5 H(+)(in) = a quinol + NAD(+) + 4 H(+)(out). In terms of biological role, NDH-1 shuttles electrons from NADH, via FMN and iron-sulfur (Fe-S) centers, to quinones in the respiratory chain. The immediate electron acceptor for the enzyme in this species is believed to be ubiquinone. Couples the redox reaction to proton translocation (for every two electrons transferred, four hydrogen ions are translocated across the cytoplasmic membrane), and thus conserves the redox energy in a proton gradient. The polypeptide is NADH-quinone oxidoreductase subunit N 2 (Koribacter versatilis (strain Ellin345)).